A 104-amino-acid polypeptide reads, in one-letter code: uncharacterized protein (104 aa).

This is an uncharacterized protein from Mycoplasma pneumoniae (strain ATCC 29342 / M129 / Subtype 1) (Mycoplasmoides pneumoniae).